A 118-amino-acid polypeptide reads, in one-letter code: Evasin P1080 (118 aa).

Residues 1–19 (FFQLAVFVVILFNINLLSA) form the signal peptide. Intrachain disulfides connect C41/C60, C45/C62, and C56/C73. N-linked (GlcNAc...) asparagine glycosylation occurs at N44. N67 and N104 each carry an N-linked (GlcNAc...) asparagine glycan.

It localises to the secreted. Salivary chemokine-binding protein which binds to host chemokines CXCL1, CXCL2, CXCL3, CXCL4, CXCL5, CXCL6, CXCL10, CXCL11 and CXCL13. This Ixodes ricinus (Common tick) protein is Evasin P1080.